The primary structure comprises 250 residues: Histidine utilization repressor (250 aa).

The HTH gntR-type domain maps to 20-88 (APLYARVKQM…QGVGTFVAEP (69 aa)). A DNA-binding region (H-T-H motif) is located at residues 48 to 67 (ESELVSQLGFSRMTINRALR).

Its pathway is amino-acid degradation; L-histidine degradation into L-glutamate [regulation]. In terms of biological role, repressor which binds to the hutP region in the histidine utilization (hut) operon. It blocks the expression of all the hut genes in the absence of inducer. The protein is Histidine utilization repressor (hutC) of Pseudomonas aeruginosa (strain ATCC 15692 / DSM 22644 / CIP 104116 / JCM 14847 / LMG 12228 / 1C / PRS 101 / PAO1).